Reading from the N-terminus, the 54-residue chain is Rubredoxin (54 aa).

Met-1 is modified (N-formylmethionine). In terms of domain architecture, Rubredoxin-like spans Met-1–Glu-54. The Fe cation site is built by Cys-6, Cys-9, Cys-39, and Cys-42.

It belongs to the rubredoxin family. It depends on Fe(3+) as a cofactor.

In terms of biological role, rubredoxin is a small nonheme, iron protein lacking acid-labile sulfide. Its single Fe, chelated to 4 Cys, functions as an electron acceptor and may also stabilize the conformation of the molecule. The protein is Rubredoxin of Clostridium pasteurianum.